A 310-amino-acid polypeptide reads, in one-letter code: Iron ABC transporter substrate-binding lipoprotein MtsA (310 aa).

Residues 1 to 20 form the signal peptide; the sequence is MGKKMSLILGAFLSVFLLVA. Cys21 carries N-palmitoyl cysteine lipidation. Cys21 carries the S-diacylglycerol cysteine lipid modification. Fe(2+)-binding residues include His68, His140, Glu206, and Asp281.

The protein belongs to the bacterial solute-binding protein 9 family. Lipoprotein receptor antigen (Lrai) subfamily.

It is found in the cell membrane. Part of the ATP-binding cassette (ABC) transport system MtsABC involved in iron import. Binds iron with high affinity and specificity and delivers it to the membrane permease for translocation into the cytoplasm. Has low affinity for Zn(2+) and Cu(2+). This chain is Iron ABC transporter substrate-binding lipoprotein MtsA (mtsA), found in Streptococcus pyogenes serotype M6 (strain ATCC BAA-946 / MGAS10394).